We begin with the raw amino-acid sequence, 943 residues long: Isoleucine--tRNA ligase (943 aa).

The short motif at 59–69 (PYANGQIHLGH) is the 'HIGH' region element. An L-isoleucyl-5'-AMP-binding site is contributed by E577. A 'KMSKS' region motif is present at residues 618-622 (KMSKS). K621 contributes to the ATP binding site. Zn(2+) is bound by residues C906, C909, C926, and C929.

It belongs to the class-I aminoacyl-tRNA synthetase family. IleS type 1 subfamily. In terms of assembly, monomer. The cofactor is Zn(2+).

It localises to the cytoplasm. The enzyme catalyses tRNA(Ile) + L-isoleucine + ATP = L-isoleucyl-tRNA(Ile) + AMP + diphosphate. In terms of biological role, catalyzes the attachment of isoleucine to tRNA(Ile). As IleRS can inadvertently accommodate and process structurally similar amino acids such as valine, to avoid such errors it has two additional distinct tRNA(Ile)-dependent editing activities. One activity is designated as 'pretransfer' editing and involves the hydrolysis of activated Val-AMP. The other activity is designated 'posttransfer' editing and involves deacylation of mischarged Val-tRNA(Ile). In Xanthomonas campestris pv. campestris (strain B100), this protein is Isoleucine--tRNA ligase.